Consider the following 474-residue polypeptide: Cysteine--tRNA ligase (474 aa).

Cys27 is a binding site for Zn(2+). Residues 29-39 carry the 'HIGH' region motif; sequence PTVYNYIHIGN. Zn(2+)-binding residues include Cys212, His237, and Glu241. Residues 271-275 carry the 'KMSKS' region motif; the sequence is KMSKS. Residue Lys274 coordinates ATP.

The protein belongs to the class-I aminoacyl-tRNA synthetase family. In terms of assembly, monomer. The cofactor is Zn(2+).

It is found in the cytoplasm. It carries out the reaction tRNA(Cys) + L-cysteine + ATP = L-cysteinyl-tRNA(Cys) + AMP + diphosphate. The polypeptide is Cysteine--tRNA ligase (Lactobacillus delbrueckii subsp. bulgaricus (strain ATCC BAA-365 / Lb-18)).